Consider the following 1357-residue polypeptide: DNA-directed RNA polymerase subunit beta (1357 aa).

The protein belongs to the RNA polymerase beta chain family. The RNAP catalytic core consists of 2 alpha, 1 beta, 1 beta' and 1 omega subunit. When a sigma factor is associated with the core the holoenzyme is formed, which can initiate transcription.

The enzyme catalyses RNA(n) + a ribonucleoside 5'-triphosphate = RNA(n+1) + diphosphate. DNA-dependent RNA polymerase catalyzes the transcription of DNA into RNA using the four ribonucleoside triphosphates as substrates. The chain is DNA-directed RNA polymerase subunit beta from Pseudomonas aeruginosa (strain ATCC 15692 / DSM 22644 / CIP 104116 / JCM 14847 / LMG 12228 / 1C / PRS 101 / PAO1).